The chain runs to 425 residues: Glutamyl-tRNA reductase (425 aa).

Substrate is bound by residues 49-52, S106, 111-113, and Q117; these read TCNR and EPQ. C50 acts as the Nucleophile in catalysis. 186–191 contributes to the NADP(+) binding site; the sequence is GAGETI.

The protein belongs to the glutamyl-tRNA reductase family. Homodimer.

The enzyme catalyses (S)-4-amino-5-oxopentanoate + tRNA(Glu) + NADP(+) = L-glutamyl-tRNA(Glu) + NADPH + H(+). Its pathway is porphyrin-containing compound metabolism; protoporphyrin-IX biosynthesis; 5-aminolevulinate from L-glutamyl-tRNA(Glu): step 1/2. In terms of biological role, catalyzes the NADPH-dependent reduction of glutamyl-tRNA(Glu) to glutamate 1-semialdehyde (GSA). The protein is Glutamyl-tRNA reductase of Saccharophagus degradans (strain 2-40 / ATCC 43961 / DSM 17024).